Reading from the N-terminus, the 250-residue chain is Accessory gland-specific peptide 26Aa (250 aa).

Positions 1 to 18 are cleaved as a signal peptide; it reads MNQILLCSQILLLFFTVA. The tract at residues 79–100 is disordered; it reads DYPINNSKSRKNSSTLPSPILT. The span at 82 to 95 shows a compositional bias: polar residues; sequence INNSKSRKNSSTLP. N-linked (GlcNAc...) asparagine glycosylation is found at Asn83, Asn90, and Asn131. Disordered stretches follow at residues 172–191 and 230–250; these read NVQNARKSTKSCKKRPSKDI and NNPATDVPTGKSPSEGNPSTT. The span at 178–187 shows a compositional bias: basic residues; sequence KSTKSCKKRP. The segment covering 240–250 has biased composition (polar residues); the sequence is KSPSEGNPSTT.

In terms of processing, proteolytically cleaved as it is secreted and in the recipient female. As to expression, main cells of the accessory glands of males.

It is found in the secreted. It localises to the extracellular space. In terms of biological role, this protein is transferred from male to female's hemolymph during mating, affecting egglaying and behavior after mating. In Drosophila mauritiana (Fruit fly), this protein is Accessory gland-specific peptide 26Aa (Acp26Aa).